The sequence spans 550 residues: Dihydroxy-acid dehydratase (550 aa).

Position 78 (Asp-78) interacts with Mg(2+). Cys-119 lines the [2Fe-2S] cluster pocket. Residues Asp-120 and Lys-121 each coordinate Mg(2+). At Lys-121 the chain carries N6-carboxylysine. Cys-191 contributes to the [2Fe-2S] cluster binding site. Glu-440 is a binding site for Mg(2+). Ser-466 (proton acceptor) is an active-site residue.

This sequence belongs to the IlvD/Edd family. Homodimer. [2Fe-2S] cluster is required as a cofactor. The cofactor is Mg(2+).

It catalyses the reaction (2R)-2,3-dihydroxy-3-methylbutanoate = 3-methyl-2-oxobutanoate + H2O. The catalysed reaction is (2R,3R)-2,3-dihydroxy-3-methylpentanoate = (S)-3-methyl-2-oxopentanoate + H2O. Its pathway is amino-acid biosynthesis; L-isoleucine biosynthesis; L-isoleucine from 2-oxobutanoate: step 3/4. The protein operates within amino-acid biosynthesis; L-valine biosynthesis; L-valine from pyruvate: step 3/4. In terms of biological role, functions in the biosynthesis of branched-chain amino acids. Catalyzes the dehydration of (2R,3R)-2,3-dihydroxy-3-methylpentanoate (2,3-dihydroxy-3-methylvalerate) into 2-oxo-3-methylpentanoate (2-oxo-3-methylvalerate) and of (2R)-2,3-dihydroxy-3-methylbutanoate (2,3-dihydroxyisovalerate) into 2-oxo-3-methylbutanoate (2-oxoisovalerate), the penultimate precursor to L-isoleucine and L-valine, respectively. The protein is Dihydroxy-acid dehydratase of Methanococcus maripaludis (strain C5 / ATCC BAA-1333).